A 379-amino-acid chain; its full sequence is 2-dehydropantoate 2-reductase (379 aa).

Residues 13–18 and Asn-119 each bind NADP(+); that span reads GLGAMG. Asn-119 contacts substrate. The active-site Proton donor is the Lys-224. Substrate is bound by residues Asn-228, Asn-232, and Ser-316. Glu-328 provides a ligand contact to NADP(+).

Belongs to the ketopantoate reductase family.

The catalysed reaction is (R)-pantoate + NADP(+) = 2-dehydropantoate + NADPH + H(+). It functions in the pathway cofactor biosynthesis; (R)-pantothenate biosynthesis; (R)-pantoate from 3-methyl-2-oxobutanoate: step 2/2. Its function is as follows. Catalyzes the NADPH-dependent reduction of ketopantoate into pantoic acid. In Saccharomyces cerevisiae (strain ATCC 204508 / S288c) (Baker's yeast), this protein is 2-dehydropantoate 2-reductase (PAN5).